A 352-amino-acid chain; its full sequence is C-X-C chemokine receptor type 4 (352 aa).

Residues 1–21 form an important for chemokine binding and signaling region; it reads MEGISIYTSDNYTEEIGSGDY. Over 1 to 38 the chain is Extracellular; that stretch reads MEGISIYTSDNYTEEIGSGDYDSIKEPCFREENAHFNR. Residue tyrosine 7 is modified to Sulfotyrosine. Residue asparagine 11 is glycosylated (N-linked (GlcNAc...) asparagine). Tyrosine 12 is subject to Sulfotyrosine. O-linked (Xyl...) (chondroitin sulfate) serine glycosylation occurs at serine 18. Residue tyrosine 21 is modified to Sulfotyrosine. 2 disulfide bridges follow: cysteine 28-cysteine 274 and cysteine 109-cysteine 186. The chain crosses the membrane as a helical span at residues 39–63; sequence IFLPTIYSIIFLTGIVGNGLVILVM. Topologically, residues 64-77 are cytoplasmic; it reads GYQKKLRSMTDKYR. The helical transmembrane segment at 78 to 99 threads the bilayer; the sequence is LHLSVADLLFVITLPFWAVDAV. Residues 94-97 are chemokine binding; sequence WAVD. Over 100 to 110 the chain is Extracellular; it reads ANWYFGKFLCK. A helical transmembrane segment spans residues 111 to 130; it reads AVHVIYTVNLYSSVLILAFI. A chemokine binding region spans residues 113 to 117; sequence HVIYT. The Cytoplasmic portion of the chain corresponds to 131-154; the sequence is SLDRYLAIVHATNSQRPRKLLAEK. An Important for signaling motif is present at residues 133-135; it reads DRY. The segment at 135–147 is involved in dimerization; when bound to chemokine; the sequence is YLAIVHATNSQRP. A helical membrane pass occupies residues 155–174; that stretch reads VVYVGVWIPALLLTIPDFIF. Residues 175 to 195 are Extracellular-facing; the sequence is ANVSEADDRYICDRFYPNDLW. A chemokine binding, important for signaling region spans residues 186–190; the sequence is CDRFY. Positions 191 to 210 are involved in dimerization; the sequence is PNDLWVVVFQFQHIMVGLIL. Residues 196–216 form a helical membrane-spanning segment; the sequence is VVVFQFQHIMVGLILPGIVIL. Topologically, residues 217 to 241 are cytoplasmic; the sequence is SCYCIIISKLSHSKGHQKRKALKTT. Residues 242–261 form a helical membrane-spanning segment; it reads VILILAFFACWLPYYIGISI. At 262–282 the chain is on the extracellular side; that stretch reads DSFILLEIIRQGCEFENTVHK. The segment at 266–268 is involved in dimerization; that stretch reads LLE. A helical transmembrane segment spans residues 283 to 302; the sequence is WISITEALAFFHCCLNPILY. Over 303 to 352 the chain is Cytoplasmic; it reads AFLGAKFKTSAQHALTSVSRGSSLKILSKGKRGGHSSVSTESESSSFHSS. A phosphoserine mark is found at serine 319 and serine 321. Phosphoserine; by PKC and GRK6 is present on residues serine 324 and serine 325. The disordered stretch occupies residues 329–352; sequence LSKGKRGGHSSVSTESESSSFHSS. Serine 330 carries the post-translational modification Phosphoserine; by GRK6. Lysine 331 participates in a covalent cross-link: Glycyl lysine isopeptide (Lys-Gly) (interchain with G-Cter in ubiquitin). A compositionally biased stretch (low complexity) spans 337 to 352; sequence HSSVSTESESSSFHSS. Serine 339 is subject to Phosphoserine; by GRK6. A phosphoserine mark is found at serine 348 and serine 351.

It belongs to the G-protein coupled receptor 1 family. As to quaternary structure, monomer. Can form homodimers. Interacts with CD164. Interacts with ARRB2; the interaction is dependent on the C-terminal phosphorylation of CXCR4 and allows activation of MAPK1 and MAPK3. Interacts with ARR3; the interaction is dependent on the C-terminal phosphorylation of CXCR4 and modulates calcium mobilization. Interacts with RNF113A; the interaction, enhanced by CXCL12, promotes CXCR4 ubiquitination and subsequent degradation. Interacts (via the cytoplasmic C-terminal) with ITCH (via the WW domains I and II); the interaction, enhanced by CXCL12, promotes CXCR4 ubiquitination and leads to its degradation. Interacts with extracellular ubiquitin. Interacts with DBN1; this interaction is enhanced by antigenic stimulation. Following LPS binding, may form a complex with GDF5, HSP90AA1 and HSPA8. Post-translationally, phosphorylated on agonist stimulation. Rapidly phosphorylated on serine and threonine residues in the C-terminal. Phosphorylation at Ser-324 and Ser-325 leads to recruitment of ITCH, ubiquitination and protein degradation. In terms of processing, ubiquitinated after ligand binding, leading to its degradation. Ubiquitinated by ITCH at the cell membrane on agonist stimulation. The ubiquitin-dependent mechanism, endosomal sorting complex required for transport (ESCRT), then targets CXCR4 for lysosomal degradation. This process is dependent also on prior Ser-/Thr-phosphorylation in the C-terminal of CXCR4. Also binding of ARRB1 to STAM negatively regulates CXCR4 sorting to lysosomes though modulating ubiquitination of SFR5S. Sulfation is required for efficient binding of CXCL12/SDF-1alpha and promotes its dimerization. Post-translationally, O- and N-glycosylated. N-glycosylation can mask coreceptor function. The O-glycosylation chondroitin sulfate attachment does not affect interaction with CXCL12/SDF-1alpha nor its coreceptor activity.

It localises to the cell membrane. It is found in the cell junction. Its subcellular location is the early endosome. The protein localises to the late endosome. The protein resides in the lysosome. In terms of biological role, receptor for the C-X-C chemokine CXCL12/SDF-1 that transduces a signal by increasing intracellular calcium ion levels and enhancing MAPK1/MAPK3 activation. Involved in the AKT signaling cascade. Plays a role in regulation of cell migration, e.g. during wound healing. Acts as a receptor for extracellular ubiquitin; leading to enhanced intracellular calcium ions and reduced cellular cAMP levels. Binds bacterial lipopolysaccharide (LPS) et mediates LPS-induced inflammatory response, including TNF secretion by monocytes. Involved in hematopoiesis and in cardiac ventricular septum formation. Also plays an essential role in vascularization of the gastrointestinal tract, probably by regulating vascular branching and/or remodeling processes in endothelial cells. Involved in cerebellar development. In the CNS, could mediate hippocampal-neuron survival. This Callithrix jacchus (White-tufted-ear marmoset) protein is C-X-C chemokine receptor type 4 (CXCR4).